We begin with the raw amino-acid sequence, 374 residues long: MQHESPIKRRPSTRIYVGDVPIGDGAPIAVQSMTNTRTTDVAATVAQIKSLEKVGADIVRVSVPTMEAAEAFKLIKQQVSVPLVADIHFDYRIALKVAEYGVDCLRINPGNIGNEARIRSVVDCARDKGIPIRIGVNGGSLEKDLQLKYGEPTPEALVESAMRHVDILDRLNFDQFKVSVKASDVFLAVDSYRLLAKKIDQPLHLGITEAGGARAGSVKSAVGLGMLLAEGIGDTLRISLAADPVEEIKVGFDILKSLRIRSRGINFIACPSCSRQEFDVIGTVNALEQRLEDVLTPMDVSIIGCVVNGPGEAEVSHLGLAGSNKKSAFYEDGVRQKERFDNDDLVAQLEAKIRAKAARLDEKNRIDIKHVEQD.

Residues Cys-270, Cys-273, Cys-305, and Glu-312 each coordinate [4Fe-4S] cluster.

The protein belongs to the IspG family. The cofactor is [4Fe-4S] cluster.

It carries out the reaction (2E)-4-hydroxy-3-methylbut-2-enyl diphosphate + oxidized [flavodoxin] + H2O + 2 H(+) = 2-C-methyl-D-erythritol 2,4-cyclic diphosphate + reduced [flavodoxin]. It participates in isoprenoid biosynthesis; isopentenyl diphosphate biosynthesis via DXP pathway; isopentenyl diphosphate from 1-deoxy-D-xylulose 5-phosphate: step 5/6. In terms of biological role, converts 2C-methyl-D-erythritol 2,4-cyclodiphosphate (ME-2,4cPP) into 1-hydroxy-2-methyl-2-(E)-butenyl 4-diphosphate. The chain is 4-hydroxy-3-methylbut-2-en-1-yl diphosphate synthase (flavodoxin) from Vibrio cholerae serotype O1 (strain ATCC 39315 / El Tor Inaba N16961).